The following is a 734-amino-acid chain: Photosystem I P700 chlorophyll a apoprotein A2 (734 aa).

8 helical membrane passes run 46 to 69, 135 to 158, 175 to 199, 273 to 291, 330 to 353, 369 to 395, 417 to 439, and 517 to 535; these read IFASHFGHLAIIFLWTSGNLFHVA, LYTGALFLLVLSAILLFGGWLHLQ, LNHHLSGLFGVSSLAWTGHLVHVAI, MAHHHLAIAVVFIVAGHMY, LHMQLGLALAALGVITSLVAQHMY, ASLYTHHQYIAGFLMVGAFAHGAIFFV, AIISHLSWVTLFLGFHTLGLYVH, and FLVHHAIALGLHTTALILV. The [4Fe-4S] cluster site is built by C559 and C568. A run of 2 helical transmembrane segments spans residues 575 to 596 and 643 to 665; these read AFYLAVFWMLNTIGWVTFYWHW and LSVWSWMFLFGHLVWATGFMFLI. The chlorophyll a site is built by H654, M662, and Y670. W671 is a binding site for phylloquinone. Residues 707 to 727 form a helical membrane-spanning segment; sequence LVGLAHFSVGYVLTYAAFVLA.

This sequence belongs to the PsaA/PsaB family. In terms of assembly, the PsaA/B heterodimer binds the P700 chlorophyll special pair and subsequent electron acceptors. PSI consists of a core antenna complex that captures photons, and an electron transfer chain that converts photonic excitation into a charge separation. The eukaryotic PSI reaction center is composed of at least 11 subunits. The cofactor is P700 is a chlorophyll a/chlorophyll a' dimer, A0 is one or more chlorophyll a, A1 is one or both phylloquinones and FX is a shared 4Fe-4S iron-sulfur center..

It localises to the plastid. The protein localises to the chloroplast thylakoid membrane. It carries out the reaction reduced [plastocyanin] + hnu + oxidized [2Fe-2S]-[ferredoxin] = oxidized [plastocyanin] + reduced [2Fe-2S]-[ferredoxin]. Its function is as follows. PsaA and PsaB bind P700, the primary electron donor of photosystem I (PSI), as well as the electron acceptors A0, A1 and FX. PSI is a plastocyanin/cytochrome c6-ferredoxin oxidoreductase, converting photonic excitation into a charge separation, which transfers an electron from the donor P700 chlorophyll pair to the spectroscopically characterized acceptors A0, A1, FX, FA and FB in turn. Oxidized P700 is reduced on the lumenal side of the thylakoid membrane by plastocyanin or cytochrome c6. This Porphyra purpurea (Red seaweed) protein is Photosystem I P700 chlorophyll a apoprotein A2.